The chain runs to 285 residues: Phosphatidylserine decarboxylase proenzyme (285 aa).

Residues D96, H152, and S250 each act as charge relay system; for autoendoproteolytic cleavage activity in the active site. S250 (schiff-base intermediate with substrate; via pyruvic acid; for decarboxylase activity) is an active-site residue. S250 is subject to Pyruvic acid (Ser); by autocatalysis.

Belongs to the phosphatidylserine decarboxylase family. PSD-B subfamily. Prokaryotic type I sub-subfamily. In terms of assembly, heterodimer of a large membrane-associated beta subunit and a small pyruvoyl-containing alpha subunit. The cofactor is pyruvate. Post-translationally, is synthesized initially as an inactive proenzyme. Formation of the active enzyme involves a self-maturation process in which the active site pyruvoyl group is generated from an internal serine residue via an autocatalytic post-translational modification. Two non-identical subunits are generated from the proenzyme in this reaction, and the pyruvate is formed at the N-terminus of the alpha chain, which is derived from the carboxyl end of the proenzyme. The autoendoproteolytic cleavage occurs by a canonical serine protease mechanism, in which the side chain hydroxyl group of the serine supplies its oxygen atom to form the C-terminus of the beta chain, while the remainder of the serine residue undergoes an oxidative deamination to produce ammonia and the pyruvoyl prosthetic group on the alpha chain. During this reaction, the Ser that is part of the protease active site of the proenzyme becomes the pyruvoyl prosthetic group, which constitutes an essential element of the active site of the mature decarboxylase.

It is found in the cell membrane. It carries out the reaction a 1,2-diacyl-sn-glycero-3-phospho-L-serine + H(+) = a 1,2-diacyl-sn-glycero-3-phosphoethanolamine + CO2. It participates in phospholipid metabolism; phosphatidylethanolamine biosynthesis; phosphatidylethanolamine from CDP-diacylglycerol: step 2/2. Functionally, catalyzes the formation of phosphatidylethanolamine (PtdEtn) from phosphatidylserine (PtdSer). In Acinetobacter baylyi (strain ATCC 33305 / BD413 / ADP1), this protein is Phosphatidylserine decarboxylase proenzyme.